We begin with the raw amino-acid sequence, 730 residues long: Catalase-peroxidase (730 aa).

The segment covering 1-11 (MDAKTDDKDAG) has biased composition (basic and acidic residues). Residues 1–21 (MDAKTDDKDAGKCPFSSGSHA) form the signal peptide. The interval 1–24 (MDAKTDDKDAGKCPFSSGSHAHRN) is disordered. A cross-link (tryptophyl-tyrosyl-methioninium (Trp-Tyr) (with M-244)) is located at residues 96 to 218 (WHSAGTYRIS…LGAVQMGLIY (123 aa)). H97 (proton acceptor) is an active-site residue. Positions 218-244 (YVNPEGPNGNPDPVGSAKDIRETFYRM) form a cross-link, tryptophyl-tyrosyl-methioninium (Tyr-Met) (with W-96). Position 259 (H259) interacts with heme b.

Belongs to the peroxidase family. Peroxidase/catalase subfamily. Homodimer or homotetramer. Heme b serves as cofactor. In terms of processing, formation of the three residue Trp-Tyr-Met cross-link is important for the catalase, but not the peroxidase activity of the enzyme.

It carries out the reaction H2O2 + AH2 = A + 2 H2O. The enzyme catalyses 2 H2O2 = O2 + 2 H2O. Its function is as follows. Bifunctional enzyme with both catalase and broad-spectrum peroxidase activity. The polypeptide is Catalase-peroxidase (Rhodopseudomonas palustris (strain BisA53)).